Reading from the N-terminus, the 570-residue chain is Protein misato homolog 1 (570 aa).

S495 carries the phosphoserine modification.

It belongs to the misato family.

It localises to the mitochondrion outer membrane. The protein resides in the cytoplasm. In terms of biological role, involved in the regulation of mitochondrial distribution and morphology. Required for mitochondrial fusion and mitochondrial network formation. The polypeptide is Protein misato homolog 1 (MSTO1) (Pongo pygmaeus (Bornean orangutan)).